A 302-amino-acid chain; its full sequence is 4-diphosphocytidyl-2-C-methyl-D-erythritol kinase (302 aa).

Lys-11 is an active-site residue. 93–103 lines the ATP pocket; sequence PVASGLAGGST. Residue Asp-135 is part of the active site.

This sequence belongs to the GHMP kinase family. IspE subfamily.

It catalyses the reaction 4-CDP-2-C-methyl-D-erythritol + ATP = 4-CDP-2-C-methyl-D-erythritol 2-phosphate + ADP + H(+). It functions in the pathway isoprenoid biosynthesis; isopentenyl diphosphate biosynthesis via DXP pathway; isopentenyl diphosphate from 1-deoxy-D-xylulose 5-phosphate: step 3/6. In terms of biological role, catalyzes the phosphorylation of the position 2 hydroxy group of 4-diphosphocytidyl-2C-methyl-D-erythritol. This is 4-diphosphocytidyl-2-C-methyl-D-erythritol kinase from Gloeobacter violaceus (strain ATCC 29082 / PCC 7421).